A 218-amino-acid polypeptide reads, in one-letter code: Ras-related protein Rab-27B (218 aa).

Thr-2 carries the post-translational modification N-acetylthreonine. Position 16 to 24 (16 to 24 (GDSGVGKTT)) interacts with GTP. Residues 38 to 46 (FITTVGIDF) carry the Effector region motif. GTP-binding positions include 74–78 (DTAGQ), 133–136 (NKAD), and 163–165 (SAA). Cys-123 and Cys-188 are oxidised to a cystine. 2 S-geranylgeranyl cysteine lipidation sites follow: Cys-216 and Cys-218. Cys-218 carries the post-translational modification Cysteine methyl ester.

The protein belongs to the small GTPase superfamily. Rab family. As to quaternary structure, interacts with SYTL2, SYTL4, MYRIP and MLPH. Interacts with RPH3A and RPH3A. Interacts (GDP-bound form preferentially) with DENND10.

Its subcellular location is the membrane. It localises to the late endosome. The enzyme catalyses GTP + H2O = GDP + phosphate + H(+). Regulated by guanine nucleotide exchange factors (GEFs) which promote the exchange of bound GDP for free GTP, GTPase activating proteins (GAPs) which increase the GTP hydrolysis activity, and GDP dissociation inhibitors which inhibit the dissociation of the nucleotide from the GTPase. Activated by GEFs such as DENND10. Functionally, small GTPase which cycles between active GTP-bound and inactive GDP-bound states. In its active state, binds to a variety of effector proteins to regulate homeostasis of late endocytic pathway, including endosomal positioning, maturation and secretion. Plays a role in NTRK2/TRKB axonal anterograde transport by facilitating the association of NTRK2/TRKB with KLC1. May be involved in targeting uroplakins to urothelial apical membranes. The polypeptide is Ras-related protein Rab-27B (Rab27b) (Rattus norvegicus (Rat)).